A 946-amino-acid chain; its full sequence is Bifunctional glutamine synthetase adenylyltransferase/adenylyl-removing enzyme (946 aa).

The tract at residues 1-440 (MKPLSSPLQQ…VFNELIGDDE (440 aa)) is adenylyl removase. Residues 449-946 (SEQWRELWQD…ASWQKWLVEE (498 aa)) are adenylyl transferase.

This sequence belongs to the GlnE family. Mg(2+) serves as cofactor.

The enzyme catalyses [glutamine synthetase]-O(4)-(5'-adenylyl)-L-tyrosine + phosphate = [glutamine synthetase]-L-tyrosine + ADP. The catalysed reaction is [glutamine synthetase]-L-tyrosine + ATP = [glutamine synthetase]-O(4)-(5'-adenylyl)-L-tyrosine + diphosphate. Involved in the regulation of glutamine synthetase GlnA, a key enzyme in the process to assimilate ammonia. When cellular nitrogen levels are high, the C-terminal adenylyl transferase (AT) inactivates GlnA by covalent transfer of an adenylyl group from ATP to specific tyrosine residue of GlnA, thus reducing its activity. Conversely, when nitrogen levels are low, the N-terminal adenylyl removase (AR) activates GlnA by removing the adenylyl group by phosphorolysis, increasing its activity. The regulatory region of GlnE binds the signal transduction protein PII (GlnB) which indicates the nitrogen status of the cell. The sequence is that of Bifunctional glutamine synthetase adenylyltransferase/adenylyl-removing enzyme from Shigella dysenteriae serotype 1 (strain Sd197).